The sequence spans 57 residues: Large ribosomal subunit protein bL32 (57 aa).

Positions 1 to 21 (MAVQQRRSSKHRRDKRRSHDA) are disordered. The span at 7-18 (RSSKHRRDKRRS) shows a compositional bias: basic residues.

The protein belongs to the bacterial ribosomal protein bL32 family.

The chain is Large ribosomal subunit protein bL32 (rpmF) from Mycoplasma pneumoniae (strain ATCC 29342 / M129 / Subtype 1) (Mycoplasmoides pneumoniae).